A 257-amino-acid chain; its full sequence is Protein IMPACT homolog (257 aa).

The RWD domain maps to 9–102 (AEIESLASIF…SLVQDFIRDL (94 aa)).

Belongs to the IMPACT family. Interacts with gcn-1; prevents the interaction of gcn-1 with gcn-2 and inhibits gcn-2 kinase activity. Interaction with rpl-39; this interaction occurs in a gcn-1-independent manner. Associates with ribosomes; this interaction occurs in a gcn-1-independent manner. Associates with actin; this interaction occurs in a gcn-1-independent manner.

The protein resides in the cytoplasm. Its function is as follows. Translational regulator that ensures constant high levels of translation under amino acid starvation. Plays a role as a negative regulator of the gcn-2 kinase activity; impairs gcn-1-mediated gcn-2 activation, and hence gcn-2-mediated eIF-2-alpha phosphorylation and subsequent down-regulation of protein synthesis in amino acid-starved cells. Plays a role in differentiation of neuronal cells by stimulating neurite outgrowth. The protein is Protein IMPACT homolog of Caenorhabditis elegans.